Reading from the N-terminus, the 521-residue chain is MSL complex subunit 3 (521 aa).

A Tudor-knot domain is found at 13–71 (SGEKVLCFEPDPTKARVLYDAKIVDVIVGKDEKGRKIPEYLIHFNGWNRSWDRWAAEDH). Disordered regions lie at residues 114–166 (KGLP…TRRE) and 298–409 (ATST…PSKE). The span at 139–149 (KDEEISEESDI) shows a compositional bias: acidic residues. Over residues 150–166 (EEKTEVKEEPELQTRRE) the composition is skewed to basic and acidic residues. The region spanning 168-517 (EERTITIEIP…CEAHYSTKNP (350 aa)) is the MRG domain. Residues 290-440 (FFLPIKESAT…WKLVPDNYPP (151 aa)) are required for the histone acetyltransferase activity of the MSL complex. S309 and S311 each carry phosphoserine. The segment covering 316–329 (NPSTPQSTESQPTT) has biased composition (low complexity). S367 and S400 each carry phosphoserine. T405 is subject to Phosphothreonine. Phosphoserine is present on residues S407 and S411.

In terms of assembly, component of the MSL histone acetyltransferase complex at least composed of the KAT8/MOF, MSL1/hampin, MSL2 and MSL3. Interacts (via the MRG domain) with MSL1 and KAT8/MOF. In terms of tissue distribution, expressed in many tissues including liver, pancreas, heart, lung, kidney, skeletal muscle, brain, and placenta, with highest expression in skeletal muscle and heart.

Its subcellular location is the nucleus. Functionally, non-catalytic component of the MSL histone acetyltransferase complex, a multiprotein complex that mediates the majority of histone H4 acetylation at 'Lys-16' (H4K16ac), an epigenetic mark that prevents chromatin compaction. The MSL complex is required for chromosome stability and genome integrity by maintaining homeostatic levels of H4K16ac. The MSL complex is also involved in gene dosage by promoting up-regulation of genes expressed by the X chromosome. X up-regulation is required to compensate for autosomal biallelic expression. The MSL complex also participates in gene dosage compensation by promoting expression of Tsix non-coding RNA. Acts as a histone reader that specifically recognizes and binds histone H4 monomethylated at 'Lys-20' (H4K20Me1) in a DNA-dependent manner and is proposed to be involved in chromosomal targeting of the MSL complex. May play a role X inactivation in females. In Homo sapiens (Human), this protein is MSL complex subunit 3.